The sequence spans 72 residues: Brevinin-2SN3 (72 aa).

The N-terminal stretch at 1–22 (MFTLKKPLLLLVFLGMISLSLC) is a signal peptide. The propeptide at 23–40 (QDERGADEDDGGEMTEEE) is removed in mature form. Cysteine 66 and cysteine 72 are disulfide-bonded.

It belongs to the frog skin active peptide (FSAP) family. Brevinin subfamily. Expressed by the skin glands.

The protein resides in the secreted. In terms of biological role, antimicrobial peptide. Active against a variety of Gram-negative and Gram-positive bacterial strains. Active against fungus C.glabrata 090902 but not against C.albicans ATCC 10231. Shows hemolytic activity against human erythrocytes. This chain is Brevinin-2SN3, found in Sylvirana spinulosa (Fine-spined frog).